The chain runs to 142 residues: Large ribosomal subunit protein uL22 (142 aa).

The tract at residues 122 to 142 (RAEAPEETKPSRGTNKEQKAA) is disordered.

This sequence belongs to the universal ribosomal protein uL22 family. In terms of assembly, part of the 50S ribosomal subunit.

In terms of biological role, this protein binds specifically to 23S rRNA; its binding is stimulated by other ribosomal proteins, e.g. L4, L17, and L20. It is important during the early stages of 50S assembly. It makes multiple contacts with different domains of the 23S rRNA in the assembled 50S subunit and ribosome. Functionally, the globular domain of the protein is located near the polypeptide exit tunnel on the outside of the subunit, while an extended beta-hairpin is found that lines the wall of the exit tunnel in the center of the 70S ribosome. This chain is Large ribosomal subunit protein uL22, found in Gluconobacter oxydans (strain 621H) (Gluconobacter suboxydans).